A 214-amino-acid polypeptide reads, in one-letter code: Redox-sensing transcriptional repressor Rex (214 aa).

Residues Leu17–Phe56 constitute a DNA-binding region (H-T-H motif). An NAD(+)-binding site is contributed by Gly91–Gly96.

The protein belongs to the transcriptional regulatory Rex family. Homodimer.

It localises to the cytoplasm. Functionally, modulates transcription in response to changes in cellular NADH/NAD(+) redox state. The protein is Redox-sensing transcriptional repressor Rex of Streptococcus pyogenes serotype M4 (strain MGAS10750).